A 260-amino-acid chain; its full sequence is Snake venom serine protease homolog 1 (260 aa).

An N-terminal signal peptide occupies residues 1–18; it reads MVLIRVLANLLLLQLSYA. A propeptide spanning residues 19–24 is cleaved from the precursor; it reads QESSEL. The 227-residue stretch at 25-251 folds into the Peptidase S1 domain; it reads VIGGDECDIN…YTDWIEGIIA (227 aa). Cystine bridges form between C31-C165, C52-C68, C100-C258, C144-C212, C176-C191, and C202-C227. An N-linked (GlcNAc...) asparagine glycan is attached at N253.

It belongs to the peptidase S1 family. Snake venom subfamily. As to expression, expressed by the venom gland.

The protein resides in the secreted. In terms of biological role, snake venom serine protease homolog that may act in the hemostasis system of the prey. The polypeptide is Snake venom serine protease homolog 1 (Bitis gabonica (Gaboon adder)).